Here is a 121-residue protein sequence, read N- to C-terminus: Large ribosomal subunit protein bL12 (121 aa).

It belongs to the bacterial ribosomal protein bL12 family. As to quaternary structure, homodimer. Part of the ribosomal stalk of the 50S ribosomal subunit. Forms a multimeric L10(L12)X complex, where L10 forms an elongated spine to which 2 to 4 L12 dimers bind in a sequential fashion. Binds GTP-bound translation factors.

In terms of biological role, forms part of the ribosomal stalk which helps the ribosome interact with GTP-bound translation factors. Is thus essential for accurate translation. The protein is Large ribosomal subunit protein bL12 of Proteus mirabilis (strain HI4320).